The chain runs to 158 residues: MKHRVVGRRLDRTTEHRTAMFKNMVTSLLRHERIVTTTPKAKELKRFADKVITQAKRGTPHARRLAHRDVRDVEVLNKLFDTLAERFKARPGGYTRIVRVGRRAGDNAEMSVIELVDRAPAAAPEAEEKGEKKAAKAPKAEKAPKAEKKPAKKAAKAE.

The interval 119–158 is disordered; that stretch reads APAAAPEAEEKGEKKAAKAPKAEKAPKAEKKPAKKAAKAE. Basic and acidic residues predominate over residues 126–158; the sequence is AEEKGEKKAAKAPKAEKAPKAEKKPAKKAAKAE.

The protein belongs to the bacterial ribosomal protein bL17 family. In terms of assembly, part of the 50S ribosomal subunit. Contacts protein L32.

The polypeptide is Large ribosomal subunit protein bL17 (Anaeromyxobacter sp. (strain K)).